We begin with the raw amino-acid sequence, 731 residues long: E3 ubiquitin-protein ligase SMURF1 (731 aa).

One can recognise a C2 domain in the interval 1–120 (MSNPGTRRNG…TGYQRLDLCK (120 aa)). At S200 the chain carries Phosphoserine. Residues 216 to 237 (EVRGPLQTPQNRPHGHQSPELP) form a disordered region. 2 consecutive WW domains span residues 234–267 (PELP…DPRI) and 280–313 (GPLP…DPRL). Glycyl lysine isopeptide (Lys-Gly) (interchain with G-Cter in ubiquitin) cross-links involve residues K355 and K357. The HECT domain maps to 394 to 731 (RPKDLKKRLM…VEETCGFAVE (338 aa)). The Glycyl thioester intermediate role is filled by C699.

As to quaternary structure, interacts with TRAF4. Interacts (via HECT domain) with FBXL15 (via LRR repeats). Interacts with SMAD7 and TGFBR1; SMAD7 recruits SMURF1 to TGFBR1 and regulates TGF-beta receptor degradation. Interacts with MAVS; the interaction is mediated by NDFIP1. Post-translationally, auto-ubiquitinated in presence of NDFIP1. Ubiquitinated by the SCF(FBXL15) complex at Lys-355 and Lys-357, leading to its degradation by the proteasome. Lys-357 is the primary ubiquitination site.

The protein localises to the cytoplasm. It is found in the cell membrane. It carries out the reaction S-ubiquitinyl-[E2 ubiquitin-conjugating enzyme]-L-cysteine + [acceptor protein]-L-lysine = [E2 ubiquitin-conjugating enzyme]-L-cysteine + N(6)-ubiquitinyl-[acceptor protein]-L-lysine.. Its pathway is protein modification; protein ubiquitination. E3 ubiquitin-protein ligase that acts as a negative regulator of BMP signaling pathway. Mediates ubiquitination and degradation of SMAD1 and SMAD5, 2 receptor-regulated SMADs specific for the BMP pathway. Promotes ubiquitination and subsequent proteasomal degradation of TRAF family members and RHOA. Promotes ubiquitination and subsequent proteasomal degradation of MAVS. Acts as an antagonist of TGF-beta signaling by ubiquitinating TGFBR1 and targeting it for degradation. Plays a role in dendrite formation by melanocytes. This Mus musculus (Mouse) protein is E3 ubiquitin-protein ligase SMURF1 (Smurf1).